A 463-amino-acid chain; its full sequence is Regulator of microtubule dynamics protein 3 (463 aa).

Topologically, residues 1 to 4 are mitochondrial intermembrane; that stretch reads MSKL. Residues 5 to 27 traverse the membrane as a helical segment; sequence ILSYRIGLGLVVGAAAGAVIYIV. Residues 28–463 lie on the Cytoplasmic side of the membrane; sequence FRRNRKKTRK…PATAEEELLV (436 aa). The FFAT signature appears at 146–161; that stretch reads IYFTATSGAAHTDAES. Residues 153-192 are disordered; it reads GAAHTDAESEGGYSTAYAESDFERESSRASEAEEEDEVSC. A compositionally biased stretch (basic and acidic residues) spans 173-183; the sequence is DFERESSRASE. The stretch at 279-302 forms a coiled coil; the sequence is AEDAQEKKSFASEGKEEAEAALQK.

The protein belongs to the RMDN family. As to quaternary structure, interacts with PTPN2. Interacts with microtubules. Interacts with VAPB. Interacts (FFAT motif) with MOSPD2 (via MSP domain).

The protein resides in the mitochondrion outer membrane. It is found in the cytoplasm. It localises to the nucleus. The protein localises to the cytoskeleton. Its subcellular location is the spindle. The protein resides in the spindle pole. Involved in cellular calcium homeostasis regulation. The chain is Regulator of microtubule dynamics protein 3 (rmdn3) from Xenopus laevis (African clawed frog).